Consider the following 498-residue polypeptide: ATP synthase subunit beta, chloroplastic (498 aa).

ATP is bound at residue 172–179; the sequence is GGAGVGKT.

It belongs to the ATPase alpha/beta chains family. As to quaternary structure, F-type ATPases have 2 components, CF(1) - the catalytic core - and CF(0) - the membrane proton channel. CF(1) has five subunits: alpha(3), beta(3), gamma(1), delta(1), epsilon(1). CF(0) has four main subunits: a(1), b(1), b'(1) and c(9-12).

The protein localises to the plastid. It is found in the chloroplast thylakoid membrane. It catalyses the reaction ATP + H2O + 4 H(+)(in) = ADP + phosphate + 5 H(+)(out). Produces ATP from ADP in the presence of a proton gradient across the membrane. The catalytic sites are hosted primarily by the beta subunits. The sequence is that of ATP synthase subunit beta, chloroplastic from Calamus usitatus (Palm tree).